The sequence spans 237 residues: Ribonuclease PH (237 aa).

Phosphate is bound by residues Arg-86 and 124-126 (GTR).

Belongs to the RNase PH family. In terms of assembly, homohexameric ring arranged as a trimer of dimers.

The enzyme catalyses tRNA(n+1) + phosphate = tRNA(n) + a ribonucleoside 5'-diphosphate. Its function is as follows. Phosphorolytic 3'-5' exoribonuclease that plays an important role in tRNA 3'-end maturation. Removes nucleotide residues following the 3'-CCA terminus of tRNAs; can also add nucleotides to the ends of RNA molecules by using nucleoside diphosphates as substrates, but this may not be physiologically important. Probably plays a role in initiation of 16S rRNA degradation (leading to ribosome degradation) during starvation. This Shewanella baltica (strain OS223) protein is Ribonuclease PH.